Consider the following 40-residue polypeptide: uncharacterized protein (40 aa).

This is an uncharacterized protein from Haemophilus influenzae (strain ATCC 51907 / DSM 11121 / KW20 / Rd).